The sequence spans 142 residues: HTH-type transcriptional regulator MntR (142 aa).

Positions 1–63 (MPTPSMEDYI…YEKYRGLILT (63 aa)) constitute an HTH dtxR-type domain. The Mn(2+) site is built by Asp-8, Glu-11, His-77, Glu-99, Glu-102, and His-103.

The protein belongs to the DtxR/MntR family. Homodimer.

It localises to the cytoplasm. DNA binding is strongly activated by Mn(2+). Central regulator of manganese homeostasis. The sequence is that of HTH-type transcriptional regulator MntR from Listeria monocytogenes serotype 4b (strain CLIP80459).